The following is a 274-amino-acid chain: 2-dehydro-3-deoxyphosphooctonate aldolase (274 aa).

This sequence belongs to the KdsA family.

The protein localises to the cytoplasm. The enzyme catalyses D-arabinose 5-phosphate + phosphoenolpyruvate + H2O = 3-deoxy-alpha-D-manno-2-octulosonate-8-phosphate + phosphate. It functions in the pathway carbohydrate biosynthesis; 3-deoxy-D-manno-octulosonate biosynthesis; 3-deoxy-D-manno-octulosonate from D-ribulose 5-phosphate: step 2/3. Its pathway is bacterial outer membrane biogenesis; lipopolysaccharide biosynthesis. This is 2-dehydro-3-deoxyphosphooctonate aldolase from Legionella pneumophila (strain Lens).